The chain runs to 980 residues: Phosphoenolpyruvate carboxylase (980 aa).

Residues H182 and K625 contribute to the active site.

It belongs to the PEPCase type 1 family. Mg(2+) is required as a cofactor.

The catalysed reaction is oxaloacetate + phosphate = phosphoenolpyruvate + hydrogencarbonate. Its function is as follows. Forms oxaloacetate, a four-carbon dicarboxylic acid source for the tricarboxylic acid cycle. The chain is Phosphoenolpyruvate carboxylase from Bordetella pertussis (strain Tohama I / ATCC BAA-589 / NCTC 13251).